Consider the following 289-residue polypeptide: Acetyl-coenzyme A carboxylase carboxyl transferase subunit beta (289 aa).

Residues 28–289 (VMTKCPKCKK…QGEGMAVWQN (262 aa)) form the CoA carboxyltransferase N-terminal domain. Positions 32, 35, 51, and 54 each coordinate Zn(2+). Residues 32–54 (CPKCKKIMYTKELLKNLKVCVNC) form a C4-type zinc finger.

This sequence belongs to the AccD/PCCB family. In terms of assembly, acetyl-CoA carboxylase is a heterohexamer composed of biotin carboxyl carrier protein (AccB), biotin carboxylase (AccC) and two subunits each of ACCase subunit alpha (AccA) and ACCase subunit beta (AccD). Zn(2+) serves as cofactor.

The protein resides in the cytoplasm. The enzyme catalyses N(6)-carboxybiotinyl-L-lysyl-[protein] + acetyl-CoA = N(6)-biotinyl-L-lysyl-[protein] + malonyl-CoA. Its pathway is lipid metabolism; malonyl-CoA biosynthesis; malonyl-CoA from acetyl-CoA: step 1/1. Its function is as follows. Component of the acetyl coenzyme A carboxylase (ACC) complex. Biotin carboxylase (BC) catalyzes the carboxylation of biotin on its carrier protein (BCCP) and then the CO(2) group is transferred by the transcarboxylase to acetyl-CoA to form malonyl-CoA. The chain is Acetyl-coenzyme A carboxylase carboxyl transferase subunit beta from Bacillus cytotoxicus (strain DSM 22905 / CIP 110041 / 391-98 / NVH 391-98).